Reading from the N-terminus, the 183-residue chain is Adenine phosphoribosyltransferase (183 aa).

The protein belongs to the purine/pyrimidine phosphoribosyltransferase family. Homodimer.

It is found in the cytoplasm. It carries out the reaction AMP + diphosphate = 5-phospho-alpha-D-ribose 1-diphosphate + adenine. Its pathway is purine metabolism; AMP biosynthesis via salvage pathway; AMP from adenine: step 1/1. In terms of biological role, catalyzes a salvage reaction resulting in the formation of AMP, that is energically less costly than de novo synthesis. This is Adenine phosphoribosyltransferase from Cronobacter sakazakii (strain ATCC BAA-894) (Enterobacter sakazakii).